The chain runs to 279 residues: MTKIKIVTDSSVTIEPELVKQLDITIVPLSVMIDNVVYSDADLKEEGKFLQLMQESKNLPKTSQPPVGVFAEIFEDLCKDGGQILAIHMSHALSGTVEAARQGASLSTADVIVVDSSFTDQALKFQVVEAAKLAQEGKDMEAILSHVEEVKNHTELYIGVSTLENLVKGGRIGRVTGLLSSLLNIRVVMQMKDHELQPMVKGRGTKTFKKWLDELITSLSERAVAEIGISYSGSDDWAKEMKESLQAYVEKPISVLETGSIIQTHTGENAWAILIRYHS.

The DegV domain maps to 4–277 (IKIVTDSSVT…ENAWAILIRY (274 aa)). Residues Thr62 and Ser94 each contribute to the hexadecanoate site.

May bind long-chain fatty acids, such as palmitate, and may play a role in lipid transport or fatty acid metabolism. The chain is DegV domain-containing protein spr1019 from Streptococcus pneumoniae (strain ATCC BAA-255 / R6).